Reading from the N-terminus, the 138-residue chain is MRTLWIVAVCLIGVEGSLLEFGMMILGETGKNPLTSYSFYGCYCGVGGKGTPKDATDRCCFVHDCCYGNLPDCSPKTDRYKYHRENGAIVCGKGTSCENRICECDRAAAICFRKNLKTYNYIYRNYPDILCKEESEKC.

The signal sequence occupies residues methionine 1–glycine 16. Disulfide bonds link cysteine 42–cysteine 131, cysteine 44–cysteine 60, cysteine 59–cysteine 111, cysteine 65–cysteine 138, cysteine 66–cysteine 104, cysteine 73–cysteine 97, and cysteine 91–cysteine 102. Tyrosine 43, glycine 45, and glycine 47 together coordinate Ca(2+). Histidine 63 is a catalytic residue. Ca(2+) is bound at residue aspartate 64. Aspartate 105 is an active-site residue.

The protein belongs to the phospholipase A2 family. Group II subfamily. D49 sub-subfamily. Monomer. Binds to calmodulin, coagulation factor X (F10), 14-3-3 proteins gamma (YWHAG) and epsilon (YWHAE), and R25, a mitochondrial membrane protein. May bind to M-type PLA2 receptor (R-180). It depends on Ca(2+) as a cofactor. Expressed by the venom gland.

The protein localises to the secreted. The protein resides in the host cytoplasm. It localises to the host cytosol. It carries out the reaction a 1,2-diacyl-sn-glycero-3-phosphocholine + H2O = a 1-acyl-sn-glycero-3-phosphocholine + a fatty acid + H(+). Snake venom phospholipase A2 (PLA2) that acts as a presynaptic neurotoxin, an inhibitor of blood coagulation, and has been found to bind with high affinity to intracellular proteins. The response of indirectly stimulated neuromuscular preparations to ammodytoxin (Atx) is triphasic. The first phase, the transient inhibition of the acetylcholine (ACh) release, starts soon after the addition of Atx and lasts for several minutes. This phase is probably independent of Atx enzymatic activity. The effect may be due to the specific binding of the toxin to presynaptic receptors. These receptors, called N-type receptors, are still unidentified. It is noteworthy that a neuronal isoform of the M-type PLA2 receptor (R180) has been identified as a high-affinity receptor for Atx in neuronal plasma membranes. It was demonstrated however that this receptor is not essential for expression of neurotoxicity by Atx. The second phase corresponds to an augmentation of neurotransmitter release. A peak is reached 10-20 minutes after exposure of the preparation to Atx and is followed by a gradual reduction. In this phase, the enzymatic activity of Atx of the mammalian is not significant. It is speculated that the increased release of neurotransmitter in this phase is induced by the interference of Atx with voltage-gated potassium channels. Measurements of ionic showed however that voltage-gated potassium channels are not affected by Atx. The third phase of the response of neuromuscular preparations to Atx, which corresponds to a complete and irreversible paralysis, is clearly dependent on the hydrolytic activity of the toxin. In addition to its presynaptic neurotoxicity, Atx shows an anticoagulant activity by binding with high affinity to activated coagulation factor X (F10) thus inhibiting the formation of the prothrombinase complex (FX/FV) and its activity (IC(50) is 240 nM). Surprisingly, Atx was discovered to bind intracellular proteins such as calmodulin (CaM), 14-3-3 proteins gamma (YWHAG) and epsilon (YWHAE), as well as R25, a mitochondrial integral membrane protein found in cerebral cortex. These findings raised a doubt about the dogma of the exclusively extracellular action of PLA2s, defended by the potential instability of these molecules in the reducing environment of the eukaryotic cytosol coupled with their possible inability to act as enzymes in this cellular compartment, due to too low concentration of calcium ions. This hypothesis was challenged efficiently by demonstrating the internalization of AtxA into a culture cells, but still remains to be directly demonstrated in vivo. PLA2 catalyzes the calcium-dependent hydrolysis of the 2-acyl groups in 3-sn-phosphoglycerides. The chain is Basic phospholipase A2 ammodytoxin C from Vipera ammodytes ammodytes (Western sand viper).